The chain runs to 187 residues: Orotate phosphoribosyltransferase (187 aa).

Position 110 to 118 (110 to 118) interacts with 5-phospho-alpha-D-ribose 1-diphosphate; that stretch reads EDVVTTGGS. The orotate site is built by Thr-114 and Arg-142.

It belongs to the purine/pyrimidine phosphoribosyltransferase family. PyrE subfamily. As to quaternary structure, homodimer. It depends on Mg(2+) as a cofactor.

It catalyses the reaction orotidine 5'-phosphate + diphosphate = orotate + 5-phospho-alpha-D-ribose 1-diphosphate. Its pathway is pyrimidine metabolism; UMP biosynthesis via de novo pathway; UMP from orotate: step 1/2. Its function is as follows. Catalyzes the transfer of a ribosyl phosphate group from 5-phosphoribose 1-diphosphate to orotate, leading to the formation of orotidine monophosphate (OMP). The polypeptide is Orotate phosphoribosyltransferase (Thermotoga maritima (strain ATCC 43589 / DSM 3109 / JCM 10099 / NBRC 100826 / MSB8)).